Reading from the N-terminus, the 116-residue chain is Phosphoribosyl-AMP cyclohydrolase (116 aa).

Residue Asp81 participates in Mg(2+) binding. Position 82 (Cys82) interacts with Zn(2+). Mg(2+) contacts are provided by Asp83 and Asp85. Residues Cys98 and Cys105 each contribute to the Zn(2+) site.

Belongs to the PRA-CH family. As to quaternary structure, homodimer. Mg(2+) serves as cofactor. The cofactor is Zn(2+).

The protein resides in the cytoplasm. It catalyses the reaction 1-(5-phospho-beta-D-ribosyl)-5'-AMP + H2O = 1-(5-phospho-beta-D-ribosyl)-5-[(5-phospho-beta-D-ribosylamino)methylideneamino]imidazole-4-carboxamide. Its pathway is amino-acid biosynthesis; L-histidine biosynthesis; L-histidine from 5-phospho-alpha-D-ribose 1-diphosphate: step 3/9. Functionally, catalyzes the hydrolysis of the adenine ring of phosphoribosyl-AMP. This chain is Phosphoribosyl-AMP cyclohydrolase, found in Mycolicibacterium vanbaalenii (strain DSM 7251 / JCM 13017 / BCRC 16820 / KCTC 9966 / NRRL B-24157 / PYR-1) (Mycobacterium vanbaalenii).